The chain runs to 206 residues: MTSNEENPVGVQTLKPNNDAKRVFEMRKIPSSNVMRVEYTKQSKYRTCVCPSALHFAEECPSNDVLFSVGAHRNMLCVAKAFDQTKPRGMQRGNRRNNVAKVMTLNELMPKDDSNDRKKAKTSKDRKVEKSSRGRASSSRSRGRGGFSRNGRDRRETDSQDEYSEDNSYKSEEESTEDETAPLTKKDMLKMMSMFQSGAKSKRRPR.

The interval 87–206 (PRGMQRGNRR…SGAKSKRRPR (120 aa)) is disordered. A compositionally biased stretch (basic and acidic residues) spans 109–132 (MPKDDSNDRKKAKTSKDRKVEKSS).

It belongs to the phytoreovirus RNA-binding protein family.

Its subcellular location is the host cytoplasm. Functionally, constituent of viral factories. Binds to ssRNA and dsRNA. The sequence is that of RNA-binding protein from Rice gall dwarf virus (RGDV).